We begin with the raw amino-acid sequence, 798 residues long: ATP-dependent RNA helicase bel (798 aa).

The segment at 16–248 is disordered; the sequence is VAGLDLNGGS…SRWKEGGGSN (233 aa). Residues 31–42 show a composition bias toward polar residues; it reads PITSKTSTNSVT. Composition is skewed to gly residues over residues 94-110, 118-132, and 154-178; these read RGGGGEYRRGGGGGGRG, YGYGSGGGGRRGGGG, and SGGGGGGGRGFGRGPSYRGGGGGSG. 2 positions are modified to phosphoserine: Ser-177 and Ser-179. Basic and acidic residues predominate over residues 198–209; that stretch reads RNDRWQEPERPA. 2 positions are modified to phosphoserine: Ser-214 and Ser-219. Positions 295-323 match the Q motif motif; that stretch reads TSFDDVQLTEIIRNNVALARYDKPTPVQK. Residues 315-322 and 339-346 contribute to the ATP site; these read YDKPTPVQ and AQTGSGKT. Residues 326–515 form the Helicase ATP-binding domain; it reads IPIIINGRDL…SDFLSNYIFL (190 aa). A DEAD box motif is present at residues 459 to 462; sequence DEAD. In terms of domain architecture, Helicase C-terminal spans 542–693; the sequence is YLLDLLSSIR…EIPSFMEDMS (152 aa). A Phosphoserine modification is found at Ser-638. Disordered regions lie at residues 689–765 and 778–798; these read MEDM…SGGG and GGSYGGGSASHSSNAPDWWAQ. Composition is skewed to gly residues over residues 706 to 717 and 740 to 750; these read RGGGGRYGGGFG and GGSGSGGGGGS.

Belongs to the DEAD box helicase family. DDX3/DED1 subfamily. In terms of tissue distribution, vas and bel colocalize in nuage (perinuclear, electron-dense granules in germline cells) and at the oocyte posterior during oogenesis.

The protein localises to the cytoplasm. It catalyses the reaction ATP + H2O = ADP + phosphate + H(+). Functionally, ATP-dependent RNA helicase that is essential and required for cellular function, larval growth, and for male and female fertility. Also required for RNA interference (RNAi), double-stranded RNA induces potent and specific gene silencing, by acting downstream of dsRNA internalization. RNAi is mediated by the RNA-induced silencing complex (RISC), a sequence-specific, multicomponent nuclease that destroys or silences messenger RNAs homologous to the silencing trigger. This is ATP-dependent RNA helicase bel from Drosophila melanogaster (Fruit fly).